Consider the following 332-residue polypeptide: DNA-directed RNA polymerase 2A (332 aa).

Residues D33, K108, and D265 contribute to the active site.

The protein belongs to the phage and mitochondrial RNA polymerase family.

It catalyses the reaction RNA(n) + a ribonucleoside 5'-triphosphate = RNA(n+1) + diphosphate. In terms of biological role, DNA-dependent RNA polymerase catalyzes the transcription of DNA into RNA using the four ribonucleoside triphosphates as substrates. The sequence is that of DNA-directed RNA polymerase 2A (RPOT2-SYL) from Nicotiana tabacum (Common tobacco).